The primary structure comprises 496 residues: Probable cytosol aminopeptidase (496 aa).

Residues Lys258 and Asp263 each coordinate Mn(2+). Lys270 is an active-site residue. The Mn(2+) site is built by Asp281, Asp340, and Glu342. The active site involves Arg344.

This sequence belongs to the peptidase M17 family. It depends on Mn(2+) as a cofactor.

The protein localises to the cytoplasm. It carries out the reaction Release of an N-terminal amino acid, Xaa-|-Yaa-, in which Xaa is preferably Leu, but may be other amino acids including Pro although not Arg or Lys, and Yaa may be Pro. Amino acid amides and methyl esters are also readily hydrolyzed, but rates on arylamides are exceedingly low.. The catalysed reaction is Release of an N-terminal amino acid, preferentially leucine, but not glutamic or aspartic acids.. Presumably involved in the processing and regular turnover of intracellular proteins. Catalyzes the removal of unsubstituted N-terminal amino acids from various peptides. The protein is Probable cytosol aminopeptidase of Helicobacter pylori (strain HPAG1).